The primary structure comprises 287 residues: MAASLWMGDLEPYMDENFISRAFATMGETVMSVKIIRNRLTGIPAGYCFVEFADLATAEKCLHKINGKPLPGATPAKRFKLNYATYGKQPDNSPEYSLFVGDLTPDVDDGMLYEFFVKVYPSCRGGKVVLDQTGVSKGYGFVKFTDELEQKRALTECQGAVGLGSKPVRLSVAIPKASRVKPVEYSQMYSYSYNQYYQQYQNYYAQWGYDQNTGSYSYSYPQYGYTQSTMQTYEEVGDDALEDPMPQLDVTEANKEFMEQSEELYDALMDCHWQPLDTVSSEIPAMM.

2 consecutive RRM domains span residues 3–86 (ASLW…YATY) and 96–175 (YSLF…VAIP).

The protein belongs to the RRM TRSPAP family. Component of the tRNA(Sec) complex composed at least of EEFSEC, SECISBP2, SEPHS1, SEPSECS, TRNAU1AP and tRNA(Sec). Found in a complex with tRNA(Sec). Interacts with SEPSECS. Associates with mRNP and/or polysomes. Found in a complex with EEFSEC, SECISBP2, TRNAU1AP and tRNA(Sec).

The protein resides in the nucleus. It is found in the cytoplasm. Involved in the early steps of selenocysteine biosynthesis and tRNA(Sec) charging to the later steps resulting in the cotranslational incorporation of selenocysteine into selenoproteins. Stabilizes the SECISBP2, EEFSEC and tRNA(Sec) complex. May be involved in the methylation of tRNA(Sec). Enhances efficiency of selenoproteins synthesis. The polypeptide is tRNA selenocysteine 1-associated protein 1 (TRNAU1AP) (Homo sapiens (Human)).